A 297-amino-acid polypeptide reads, in one-letter code: N-acetylneuraminate lyase (297 aa).

Ser47 and Thr48 together coordinate aceneuramate. Tyr137 acts as the Proton donor in catalysis. Catalysis depends on Lys165, which acts as the Schiff-base intermediate with substrate. Residues Thr167, Gly189, Asp191, Glu192, and Ser208 each coordinate aceneuramate.

The protein belongs to the DapA family. NanA subfamily. In terms of assembly, homotetramer.

The protein localises to the cytoplasm. It catalyses the reaction aceneuramate = aldehydo-N-acetyl-D-mannosamine + pyruvate. The protein operates within amino-sugar metabolism; N-acetylneuraminate degradation; D-fructose 6-phosphate from N-acetylneuraminate: step 1/5. Functionally, catalyzes the reversible aldol cleavage of N-acetylneuraminic acid (sialic acid; Neu5Ac) to form pyruvate and N-acetylmannosamine (ManNAc) via a Schiff base intermediate. This Salmonella agona (strain SL483) protein is N-acetylneuraminate lyase.